The following is a 547-amino-acid chain: Large cysteine-rich periplasmic protein OmcB (547 aa).

A signal peptide spans 1 to 22; the sequence is MNKLIRRAVTIFAVTSVASLFA. Residues 23–40 constitute a propeptide that is removed on maturation; it reads SGVLETSMAESLSTNVIS. The segment at 45–84 is disordered; sequence KAKDNTSHKSKKARKNHSKETPVDRKEVAPVHESKATGPK. Over residues 52–61 the composition is skewed to basic residues; it reads HKSKKARKNH. Residues 62–79 show a composition bias toward basic and acidic residues; the sequence is SKETPVDRKEVAPVHESK.

Part of a disulfide cross-linked outer membrane complex (COMC) composed of the major outer membrane porin (MOMP), the small cysteine-rich protein (OmcA) and the large cysteine-rich periplasmic protein (OmcB).

Its subcellular location is the periplasm. Its function is as follows. In elementary bodies (EBs, the infectious stage, which is able to survive outside the host cell) provides the structural integrity of the outer envelope through disulfide cross-links with the small cysteine-rich protein and the major outer membrane protein. It has been described in publications as the Sarkosyl-insoluble COMC (Chlamydia outer membrane complex), and serves as the functional equivalent of peptidoglycan. This chain is Large cysteine-rich periplasmic protein OmcB (omcB), found in Chlamydia trachomatis serovar D (strain ATCC VR-885 / DSM 19411 / UW-3/Cx).